Consider the following 339-residue polypeptide: Annexin A2 (339 aa).

The residue at position 2 (serine 2) is an N-acetylserine. The segment at 2–24 is S100A10-binding site; that stretch reads STVHEILCKLSLEGDHSTPPSAY. Tyrosine 24 is subject to Phosphotyrosine; by SRC. Serine 26 carries the post-translational modification Phosphoserine; by PKC. Annexin repeat units lie at residues 33 to 104 and 105 to 176; these read FDAE…GLLK and TPAQ…ALAK. N6-acetyllysine; alternate is present on lysine 49. Residue lysine 49 forms a Glycyl lysine isopeptide (Lys-Gly) (interchain with G-Cter in SUMO1); alternate linkage. Lysine 49 is covalently cross-linked (Glycyl lysine isopeptide (Lys-Gly) (interchain with G-Cter in SUMO2); alternate). N6-acetyllysine is present on lysine 152. At serine 184 the chain carries Phosphoserine. Annexin repeat units follow at residues 189 to 261 and 265 to 336; these read ELID…NLVQ and NKPL…YLCG. Tyrosine 199 is modified (phosphotyrosine). Lysine 227 bears the N6-acetyllysine mark.

This sequence belongs to the annexin family. Heterotetramer containing 2 light chains of S100A10/p11 and 2 heavy chains of ANXA2/p36. Interacts with ATP1B1. Interacts with DYSF. Interacts with COCH. Interacts (via repeat Annexin 1) with PCSK9 (via the C-terminal domain); the interaction inhibits the degradation of LDLR. Interacts with CEACAM1 (via the cytoplasmic domain); this interaction is regulated by phosphorylation of CEACAM1. Interacts with APPL2 and APPL1; targets APPL2 to endosomes and acting in parallel to RAB5A. Interacts with S100A4. May interact with UBAP2. Post-translationally, ISGylated. As to expression, expressed strongly in velvet antler reserve mesenchyme.

Its subcellular location is the secreted. It is found in the extracellular space. The protein localises to the extracellular matrix. It localises to the basement membrane. Functionally, calcium-regulated membrane-binding protein whose affinity for calcium is greatly enhanced by anionic phospholipids. It binds two calcium ions with high affinity. May be involved in heat-stress response. Inhibits PCSK9-enhanced LDLR degradation, probably reduces PCSK9 protein levels via a translational mechanism but also competes with LDLR for binding with PCSK9. Binds to endosomes damaged by phagocytosis of particulate wear debris and participates in endosomal membrane stabilization, thereby limiting NLRP3 inflammasome activation. Required for endothelial cell surface plasmin generation and may support fibrinolytic surveillance and neoangiogenesis. The chain is Annexin A2 (ANXA2) from Cervus elaphus (Red deer).